The following is a 360-amino-acid chain: Glycerol-1-phosphate dehydrogenase [NAD(P)+] (360 aa).

NAD(+) is bound by residues 108–112 and 130–133; these read GRVID and TAAS. Asp135 is a substrate binding site. Ser139 is a binding site for NAD(+). Substrate is bound at residue Asp182. Zn(2+)-binding residues include Asp182 and His262. Residue His266 coordinates substrate. His278 contributes to the Zn(2+) binding site.

It belongs to the glycerol-1-phosphate dehydrogenase family. Zn(2+) is required as a cofactor.

It localises to the cytoplasm. The enzyme catalyses sn-glycerol 1-phosphate + NAD(+) = dihydroxyacetone phosphate + NADH + H(+). The catalysed reaction is sn-glycerol 1-phosphate + NADP(+) = dihydroxyacetone phosphate + NADPH + H(+). It participates in membrane lipid metabolism; glycerophospholipid metabolism. Functionally, catalyzes the NAD(P)H-dependent reduction of dihydroxyacetonephosphate (DHAP or glycerone phosphate) to glycerol 1-phosphate (G1P). The G1P thus generated is used as the glycerophosphate backbone of phospholipids in the cellular membranes of Archaea. In Methanocorpusculum labreanum (strain ATCC 43576 / DSM 4855 / Z), this protein is Glycerol-1-phosphate dehydrogenase [NAD(P)+].